The primary structure comprises 477 residues: Aspartyl/glutamyl-tRNA(Asn/Gln) amidotransferase subunit B (477 aa).

Belongs to the GatB/GatE family. GatB subfamily. As to quaternary structure, heterotrimer of A, B and C subunits.

It carries out the reaction L-glutamyl-tRNA(Gln) + L-glutamine + ATP + H2O = L-glutaminyl-tRNA(Gln) + L-glutamate + ADP + phosphate + H(+). It catalyses the reaction L-aspartyl-tRNA(Asn) + L-glutamine + ATP + H2O = L-asparaginyl-tRNA(Asn) + L-glutamate + ADP + phosphate + 2 H(+). Allows the formation of correctly charged Asn-tRNA(Asn) or Gln-tRNA(Gln) through the transamidation of misacylated Asp-tRNA(Asn) or Glu-tRNA(Gln) in organisms which lack either or both of asparaginyl-tRNA or glutaminyl-tRNA synthetases. The reaction takes place in the presence of glutamine and ATP through an activated phospho-Asp-tRNA(Asn) or phospho-Glu-tRNA(Gln). The sequence is that of Aspartyl/glutamyl-tRNA(Asn/Gln) amidotransferase subunit B from Streptococcus gordonii (strain Challis / ATCC 35105 / BCRC 15272 / CH1 / DL1 / V288).